Consider the following 82-residue polypeptide: RNA-binding protein TTE2299 (82 aa).

Belongs to the eukaryotic ribosomal protein eL8 family.

This Caldanaerobacter subterraneus subsp. tengcongensis (strain DSM 15242 / JCM 11007 / NBRC 100824 / MB4) (Thermoanaerobacter tengcongensis) protein is RNA-binding protein TTE2299.